We begin with the raw amino-acid sequence, 130 residues long: S-protein homolog 32 (130 aa).

The signal sequence occupies residues 1 to 21 (MKYFTIFVFVFSLCMLGHVSG).

This sequence belongs to the plant self-incompatibility (S1) protein family.

It localises to the secreted. The sequence is that of S-protein homolog 32 from Arabidopsis thaliana (Mouse-ear cress).